The chain runs to 1065 residues: DNA-directed RNA polymerase subunit beta (1065 aa).

It belongs to the RNA polymerase beta chain family. In terms of assembly, in plastids the minimal PEP RNA polymerase catalytic core is composed of four subunits: alpha, beta, beta', and beta''. When a (nuclear-encoded) sigma factor is associated with the core the holoenzyme is formed, which can initiate transcription.

Its subcellular location is the plastid. It localises to the chloroplast. The enzyme catalyses RNA(n) + a ribonucleoside 5'-triphosphate = RNA(n+1) + diphosphate. Its function is as follows. DNA-dependent RNA polymerase catalyzes the transcription of DNA into RNA using the four ribonucleoside triphosphates as substrates. The sequence is that of DNA-directed RNA polymerase subunit beta from Marchantia polymorpha (Common liverwort).